A 673-amino-acid polypeptide reads, in one-letter code: Protein kinase C delta type (673 aa).

In terms of domain architecture, C2 spans 1–106 (MAPFLRISFN…KNNGKAEFWL (106 aa)). A phosphothreonine mark is found at Thr43 and Thr50. Tyr64 is subject to Phosphotyrosine. Ser130 is subject to Phosphoserine. Thr141 carries the post-translational modification Phosphothreonine. A Phosphotyrosine modification is found at Tyr155. The segment at 158–208 (NHEFIATFFGQPTFCSVCKEFVWGLNKQGYKCRQCNAAIHKKCIDKIIGRC) adopts a Phorbol-ester/DAG-type 1 zinc-finger fold. The residue at position 218 (Thr218) is a Phosphothreonine. Residues 230–280 (PHRFKVYNYMSPTFCDHCGTLLWGLVKQGLKCEDCGMNVHHKCREKVANLC) form a Phorbol-ester/DAG-type 2 zinc finger. Residue Ser299 is modified to Phosphoserine; by autocatalysis. Phosphotyrosine; by SRC occurs at positions 311 and 332. One can recognise a Protein kinase domain in the interval 347-601 (FTFQKVLGKG…TGNIRLHPFF (255 aa)). Position 353-361 (353-361 (LGKGSFGKV)) interacts with ATP. Phosphotyrosine is present on Tyr372. Lys376 serves as a coordination point for ATP. Residue Thr449 is modified to Phosphothreonine. The active-site Proton acceptor is Asp471. At Ser504 the chain carries Phosphoserine. Thr505 carries the post-translational modification Phosphothreonine; by autocatalysis. Tyr565 carries the phosphotyrosine modification. One can recognise an AGC-kinase C-terminal domain in the interval 602–673 (KTINWNLLEK…VNPKYEQFLE (72 aa)). Ser643, Ser652, and Ser662 each carry phosphoserine.

The protein belongs to the protein kinase superfamily. AGC Ser/Thr protein kinase family. PKC subfamily. In terms of assembly, interacts with PDPK1 (via N-terminal region). Interacts with RAD9A. Interacts with CDCP1. Interacts with MUC1. Interacts with VASP. Interacts with CAVIN3. Interacts with PRKD2 (via N-terminus and zing-finger domain 1 and 2) in response to oxidative stress; the interaction is independent of PRKD2 tyrosine phosphorylation. Interacts with PLSC3; interaction is enhanced by UV irradiation. Autophosphorylated and/or phosphorylated at Thr-505, within the activation loop; phosphorylation at Thr-505 is not a prerequisite for enzymatic activity. Autophosphorylated at Ser-299. Upon TNFSF10/TRAIL treatment, phosphorylated at Tyr-155; phosphorylation is required for its translocation to the endoplasmic reticulum and cleavage by caspase-3. Phosphorylated at Tyr-311, Tyr-332 and Tyr-565; phosphorylation of Tyr-311 and Tyr-565 following thrombin or zymosan stimulation potentiates its kinase activity. Phosphorylated by protein kinase PDPK1; phosphorylation is inhibited by the apoptotic C-terminal cleavage product of PKN2. Phosphorylated at Tyr-311 and Tyr-332 by SRC; phosphorylation leads to enhanced autophosphorylation at Thr-505. Phosphorylated at Tyr-311 through a SYK and SRC mechanism downstream of C-type lectin receptors activation, promoting its activation. In terms of processing, proteolytically cleaved into a catalytic subunit and a regulatory subunit by caspase-3 during apoptosis which results in kinase activation.

It is found in the cytoplasm. The protein localises to the nucleus. The protein resides in the perinuclear region. Its subcellular location is the cell membrane. It localises to the mitochondrion. It is found in the endomembrane system. The enzyme catalyses L-seryl-[protein] + ATP = O-phospho-L-seryl-[protein] + ADP + H(+). The catalysed reaction is L-threonyl-[protein] + ATP = O-phospho-L-threonyl-[protein] + ADP + H(+). It carries out the reaction L-tyrosyl-[protein] + ATP = O-phospho-L-tyrosyl-[protein] + ADP + H(+). Its activity is regulated as follows. Novel PKCs (PRKCD, PRKCE, PRKCH and PRKCQ) are calcium-insensitive, but activated by diacylglycerol (DAG) and phosphatidylserine. Three specific sites; Thr-505 (activation loop of the kinase domain), Ser-643 (turn motif) and Ser-662 (hydrophobic region), need to be phosphorylated for its full activation. Activated by caspase-3 (CASP3) cleavage during apoptosis. After cleavage, the pseudosubstrate motif in the regulatory subunit is released from the substrate recognition site of the catalytic subunit, which enables PRKCD to become constitutively activated. The catalytic subunit which displays properties of a sphingosine-dependent protein kinase is activated by D-erythro-sphingosine (Sph) or N,N-dimethyl-D-erythrosphingosine (DMS) or N,N,N-trimethyl-D-erythrosphingosine (TMS), but not by ceramide or Sph-1-P and is strongly inhibited by phosphatidylserine. In terms of biological role, calcium-independent, phospholipid- and diacylglycerol (DAG)-dependent serine/threonine-protein kinase that plays contrasting roles in cell death and cell survival by functioning as a pro-apoptotic protein during DNA damage-induced apoptosis, but acting as an anti-apoptotic protein during cytokine receptor-initiated cell death, is involved in tumor suppression, is required for oxygen radical production by NADPH oxidase and acts as a positive or negative regulator in platelet functional responses. Upon DNA damage, activates the promoter of the death-promoting transcription factor BCLAF1/Btf to trigger BCLAF1-mediated p53/TP53 gene transcription and apoptosis. In response to oxidative stress, interact with and activate CHUK/IKKA in the nucleus, causing the phosphorylation of p53/TP53. In the case of ER stress or DNA damage-induced apoptosis, can form a complex with the tyrosine-protein kinase ABL1 which trigger apoptosis independently of p53/TP53. In cytosol can trigger apoptosis by activating MAPK11 or MAPK14, inhibiting AKT1 and decreasing the level of X-linked inhibitor of apoptosis protein (XIAP), whereas in nucleus induces apoptosis via the activation of MAPK8 or MAPK9. Upon ionizing radiation treatment, is required for the activation of the apoptosis regulators BAX and BAK, which trigger the mitochondrial cell death pathway. Can phosphorylate MCL1 and target it for degradation which is sufficient to trigger for BAX activation and apoptosis. Is required for the control of cell cycle progression both at G1/S and G2/M phases. Mediates phorbol 12-myristate 13-acetate (PMA)-induced inhibition of cell cycle progression at G1/S phase by up-regulating the CDK inhibitor CDKN1A/p21 and inhibiting the cyclin CCNA2 promoter activity. In response to UV irradiation can phosphorylate CDK1, which is important for the G2/M DNA damage checkpoint activation. Can protect glioma cells from the apoptosis induced by TNFSF10/TRAIL, probably by inducing increased phosphorylation and subsequent activation of AKT1. Can also act as tumor suppressor upon mitogenic stimulation with PMA or TPA. In N-formyl-methionyl-leucyl-phenylalanine (fMLP)-treated cells, is required for NCF1 (p47-phox) phosphorylation and activation of NADPH oxidase activity, and regulates TNF-elicited superoxide anion production in neutrophils, by direct phosphorylation and activation of NCF1 or indirectly through MAPK1/3 (ERK1/2) signaling pathways. Involved in antifungal immunity by mediating phosphorylation and activation of CARD9 downstream of C-type lectin receptors activation, promoting interaction between CARD9 and BCL10, followed by activation of NF-kappa-B and MAP kinase p38 pathways. May also play a role in the regulation of NADPH oxidase activity in eosinophil after stimulation with IL5, leukotriene B4 or PMA. In collagen-induced platelet aggregation, acts a negative regulator of filopodia formation and actin polymerization by interacting with and negatively regulating VASP phosphorylation. Downstream of PAR1, PAR4 and CD36/GP4 receptors, regulates differentially platelet dense granule secretion; acts as a positive regulator in PAR-mediated granule secretion, whereas it negatively regulates CD36/GP4-mediated granule release. Phosphorylates MUC1 in the C-terminal and regulates the interaction between MUC1 and beta-catenin. The catalytic subunit phosphorylates 14-3-3 proteins (YWHAB, YWHAZ and YWHAH) in a sphingosine-dependent fashion. Phosphorylates ELAVL1 in response to angiotensin-2 treatment. Phosphorylates mitochondrial phospholipid scramblase 3 (PLSCR3), resulting in increased cardiolipin expression on the mitochondrial outer membrane which facilitates apoptosis. Phosphorylates SMPD1 which induces SMPD1 secretion. Truncated isoform 2 is inactive. The protein is Protein kinase C delta type of Rattus norvegicus (Rat).